The following is a 353-amino-acid chain: Photosystem II D2 protein (353 aa).

An N-acetylthreonine modification is found at threonine 2. At threonine 2 the chain carries Phosphothreonine. A helical transmembrane segment spans residues cysteine 41–threonine 61. Histidine 118 contributes to the chlorophyll a binding site. Residues glycine 125–proline 141 form a helical membrane-spanning segment. Pheophytin a-binding residues include glutamine 130 and asparagine 143. Residues valine 153–serine 166 form a helical membrane-spanning segment. Position 198 (histidine 198) interacts with chlorophyll a. The helical transmembrane segment at alanine 208 to aspartate 228 threads the bilayer. Residues histidine 215 and phenylalanine 262 each contribute to the a plastoquinone site. Histidine 215 contributes to the Fe cation binding site. Histidine 269 contributes to the Fe cation binding site. Residues glycine 279–arginine 295 form a helical membrane-spanning segment.

Belongs to the reaction center PufL/M/PsbA/D family. As to quaternary structure, PSII is composed of 1 copy each of membrane proteins PsbA, PsbB, PsbC, PsbD, PsbE, PsbF, PsbH, PsbI, PsbJ, PsbK, PsbL, PsbM, PsbT, PsbX, PsbY, PsbZ, Psb30/Ycf12, at least 3 peripheral proteins of the oxygen-evolving complex and a large number of cofactors. It forms dimeric complexes. The cofactor is The D1/D2 heterodimer binds P680, chlorophylls that are the primary electron donor of PSII, and subsequent electron acceptors. It shares a non-heme iron and each subunit binds pheophytin, quinone, additional chlorophylls, carotenoids and lipids. There is also a Cl(-1) ion associated with D1 and D2, which is required for oxygen evolution. The PSII complex binds additional chlorophylls, carotenoids and specific lipids..

The protein localises to the plastid. The protein resides in the chloroplast thylakoid membrane. It carries out the reaction 2 a plastoquinone + 4 hnu + 2 H2O = 2 a plastoquinol + O2. Photosystem II (PSII) is a light-driven water:plastoquinone oxidoreductase that uses light energy to abstract electrons from H(2)O, generating O(2) and a proton gradient subsequently used for ATP formation. It consists of a core antenna complex that captures photons, and an electron transfer chain that converts photonic excitation into a charge separation. The D1/D2 (PsbA/PsbD) reaction center heterodimer binds P680, the primary electron donor of PSII as well as several subsequent electron acceptors. D2 is needed for assembly of a stable PSII complex. This Platanus occidentalis (Sycamore) protein is Photosystem II D2 protein.